Here is a 164-residue protein sequence, read N- to C-terminus: Phosphopantetheine adenylyltransferase (164 aa).

Position 9 (Ser-9) interacts with substrate. ATP is bound by residues 9–10 and His-17; that span reads SF. Substrate is bound by residues Lys-41, Leu-73, and Lys-87. Residues 88-90, Glu-98, and 123-129 contribute to the ATP site; these read GLR and YSYLSSS.

The protein belongs to the bacterial CoaD family. Homohexamer. The cofactor is Mg(2+).

Its subcellular location is the cytoplasm. It catalyses the reaction (R)-4'-phosphopantetheine + ATP + H(+) = 3'-dephospho-CoA + diphosphate. It participates in cofactor biosynthesis; coenzyme A biosynthesis; CoA from (R)-pantothenate: step 4/5. Functionally, reversibly transfers an adenylyl group from ATP to 4'-phosphopantetheine, yielding dephospho-CoA (dPCoA) and pyrophosphate. The sequence is that of Phosphopantetheine adenylyltransferase from Clostridium botulinum (strain 657 / Type Ba4).